Here is a 132-residue protein sequence, read N- to C-terminus: Regulator of ribonuclease activity B (132 aa).

Belongs to the RraB family. As to quaternary structure, interacts with the C-terminal region of Rne.

The protein resides in the cytoplasm. Its function is as follows. Globally modulates RNA abundance by binding to RNase E (Rne) and regulating its endonucleolytic activity. Can modulate Rne action in a substrate-dependent manner by altering the composition of the degradosome. This Alteromonas mediterranea (strain DSM 17117 / CIP 110805 / LMG 28347 / Deep ecotype) protein is Regulator of ribonuclease activity B.